We begin with the raw amino-acid sequence, 607 residues long: MNKEERAKRQSKIRNFSIIAHIDHGKSTLADRILEKTNALTQREMKAQLLDSMDLERERGITIKLNAVQLNYKAKDGEEYILHLIDTPGHVDFTYEVSRSLAACEGAILVVDAAQGIEAQTLANVYLALDNNLEILPVINKIDLPSADPERVRQEVEDVIGLDASEAVLASAKAGIGIEEILEQIVEKVPAPTGDSEEPLQCMIFDSLYDPYRGVIAYIRVVNGTVKVGDKVRMMATGKEFEVTEVGVFTPKTTQRDELTVGDVGFLAASIKNVGDTRVGDTITHAKRPAAEPLAGYRKLNPMVFCGLYPIDSARYNDLRDALEKLELNDSALEFEPETSQALGFGFRCGFLGLLHMEIIQERIEREFKIDLITTAPSVIYKVFLTNGEDMIVDNPSNMPDPQIIDRVEEPFVKAAIMVPNDYVGAVMEICQGKRGTFIDMQYLDETRVTLTYEIPLSEIVYDFFDQLKSNTKGYASFDYELIGYKPSKLVKMDILLNSEQVDALSFIVHRDSAYDRGKVIVEKLKELIPRQQFEVPIQATIGNKVVARSTIKAMRKNVLAKCYGGDISRKRKLLDKQKEGKKRMKSVGSVEVPQEAFMAVLKMDDN.

Residues 11–193 (SKIRNFSIIA…QIVEKVPAPT (183 aa)) form the tr-type G domain. GTP contacts are provided by residues 23-28 (DHGKST) and 140-143 (NKID).

This sequence belongs to the TRAFAC class translation factor GTPase superfamily. Classic translation factor GTPase family. LepA subfamily.

The protein localises to the cell membrane. The enzyme catalyses GTP + H2O = GDP + phosphate + H(+). Functionally, required for accurate and efficient protein synthesis under certain stress conditions. May act as a fidelity factor of the translation reaction, by catalyzing a one-codon backward translocation of tRNAs on improperly translocated ribosomes. Back-translocation proceeds from a post-translocation (POST) complex to a pre-translocation (PRE) complex, thus giving elongation factor G a second chance to translocate the tRNAs correctly. Binds to ribosomes in a GTP-dependent manner. The polypeptide is Elongation factor 4 (Bacillus cereus (strain ZK / E33L)).